An 89-amino-acid polypeptide reads, in one-letter code: Probable oxaloacetate decarboxylase gamma chain (89 aa).

Residues 13–33 traverse the membrane as a helical segment; that stretch reads LMLSGMGFVITFLLILIWAIT.

This sequence belongs to the OadG family. In terms of assembly, heterotrimer of an alpha, a beta and a gamma subunit. It depends on Na(+) as a cofactor.

The protein localises to the cell membrane. The catalysed reaction is oxaloacetate + 2 Na(+)(in) + H(+) = pyruvate + 2 Na(+)(out) + CO2. Functionally, catalyzes the decarboxylation of oxaloacetate coupled to Na(+) translocation. In Actinobacillus succinogenes (strain ATCC 55618 / DSM 22257 / CCUG 43843 / 130Z), this protein is Probable oxaloacetate decarboxylase gamma chain.